Consider the following 417-residue polypeptide: Exodeoxyribonuclease 7 large subunit (417 aa).

This sequence belongs to the XseA family. In terms of assembly, heterooligomer composed of large and small subunits.

It localises to the cytoplasm. It catalyses the reaction Exonucleolytic cleavage in either 5'- to 3'- or 3'- to 5'-direction to yield nucleoside 5'-phosphates.. Functionally, bidirectionally degrades single-stranded DNA into large acid-insoluble oligonucleotides, which are then degraded further into small acid-soluble oligonucleotides. The chain is Exodeoxyribonuclease 7 large subunit from Helicobacter hepaticus (strain ATCC 51449 / 3B1).